We begin with the raw amino-acid sequence, 292 residues long: MTSSAGQRISCNVVETRRDDVARIFNIQRYSLNDGEGIRTVVFFKGCPHLCPWCANPESISGKIQTVRREAKCLHCAKCLRDADECPSGAFERIGRDISLDALEREVMKDDIFFRTSGGGVTLSGGEVLMQAEFATRFLQRLRLWGVSCAIETAGDAPASKLLPLAKLCDEVLFDLKIMDATQARDVVKMNLPRVLENLRLLVSEGVNVIPRLPLIPGFTLSRENMQQALDVLIPLNIRQIHLLPFHQYGEPKYRLLGKTWSMKEVPAPSSADVATMREMAERAGLQVTVGG.

A Radical SAM core domain is found at 33-287 (NDGEGIRTVV…REMAERAGLQ (255 aa)). [4Fe-4S] cluster-binding residues include C47, C51, and C54. 53 to 55 (WCA) is a binding site for S-adenosyl-L-methionine. The 4Fe-4S ferredoxin-type domain maps to 62–96 (GKIQTVRREAKCLHCAKCLRDADECPSGAFERIGR). S-adenosyl-L-methionine is bound by residues G126, 175–177 (DLK), and H247.

Belongs to the organic radical-activating enzymes family. The cofactor is [4Fe-4S] cluster.

The protein localises to the cytoplasm. It carries out the reaction glycyl-[formate C-acetyltransferase] + reduced [flavodoxin] + S-adenosyl-L-methionine = glycin-2-yl radical-[formate C-acetyltransferase] + semiquinone [flavodoxin] + 5'-deoxyadenosine + L-methionine + H(+). Its function is as follows. Activation of pyruvate formate-lyase 2 under anaerobic conditions by generation of an organic free radical, using S-adenosylmethionine and reduced flavodoxin as cosubstrates to produce 5'-deoxy-adenosine. The polypeptide is Pyruvate formate-lyase 2-activating enzyme (pflC) (Escherichia coli (strain K12)).